Reading from the N-terminus, the 82-residue chain is Small ribosomal subunit protein bS16 (82 aa).

This sequence belongs to the bacterial ribosomal protein bS16 family.

The chain is Small ribosomal subunit protein bS16 from Photorhabdus laumondii subsp. laumondii (strain DSM 15139 / CIP 105565 / TT01) (Photorhabdus luminescens subsp. laumondii).